Reading from the N-terminus, the 447-residue chain is Na(+)-translocating NADH-quinone reductase subunit A (447 aa).

This sequence belongs to the NqrA family. Composed of six subunits; NqrA, NqrB, NqrC, NqrD, NqrE and NqrF.

The enzyme catalyses a ubiquinone + n Na(+)(in) + NADH + H(+) = a ubiquinol + n Na(+)(out) + NAD(+). In terms of biological role, NQR complex catalyzes the reduction of ubiquinone-1 to ubiquinol by two successive reactions, coupled with the transport of Na(+) ions from the cytoplasm to the periplasm. NqrA to NqrE are probably involved in the second step, the conversion of ubisemiquinone to ubiquinol. The sequence is that of Na(+)-translocating NADH-quinone reductase subunit A from Yersinia pestis.